The following is a 373-amino-acid chain: sn-glycerol-3-phosphate import ATP-binding protein UgpC (373 aa).

Positions 4–235 constitute an ABC transporter domain; it reads LTLSNITKSY…PASVFVATFI (232 aa). Position 37 to 44 (37 to 44) interacts with ATP; sequence GPSGCGKS.

The protein belongs to the ABC transporter superfamily. sn-glycerol-3-phosphate importer (TC 3.A.1.1.3) family. As to quaternary structure, the complex is composed of two ATP-binding proteins (UgpC), two transmembrane proteins (UgpA and UgpE) and a solute-binding protein (UgpB).

It is found in the cell inner membrane. The catalysed reaction is sn-glycerol 3-phosphate(out) + ATP + H2O = sn-glycerol 3-phosphate(in) + ADP + phosphate + H(+). Functionally, part of the ABC transporter complex UgpBAEC involved in sn-glycerol-3-phosphate (G3P) import. Responsible for energy coupling to the transport system. The polypeptide is sn-glycerol-3-phosphate import ATP-binding protein UgpC (Psychromonas ingrahamii (strain DSM 17664 / CCUG 51855 / 37)).